A 371-amino-acid chain; its full sequence is UDP-N-acetylglucosamine--N-acetylmuramyl-(pentapeptide) pyrophosphoryl-undecaprenol N-acetylglucosamine transferase (371 aa).

UDP-N-acetyl-alpha-D-glucosamine contacts are provided by residues 15-17 (TGG), asparagine 126, arginine 172, serine 199, isoleucine 256, 275-280 (ALTVSE), and glutamine 301.

This sequence belongs to the glycosyltransferase 28 family. MurG subfamily.

It is found in the cell inner membrane. It catalyses the reaction di-trans,octa-cis-undecaprenyl diphospho-N-acetyl-alpha-D-muramoyl-L-alanyl-D-glutamyl-meso-2,6-diaminopimeloyl-D-alanyl-D-alanine + UDP-N-acetyl-alpha-D-glucosamine = di-trans,octa-cis-undecaprenyl diphospho-[N-acetyl-alpha-D-glucosaminyl-(1-&gt;4)]-N-acetyl-alpha-D-muramoyl-L-alanyl-D-glutamyl-meso-2,6-diaminopimeloyl-D-alanyl-D-alanine + UDP + H(+). Its pathway is cell wall biogenesis; peptidoglycan biosynthesis. Its function is as follows. Cell wall formation. Catalyzes the transfer of a GlcNAc subunit on undecaprenyl-pyrophosphoryl-MurNAc-pentapeptide (lipid intermediate I) to form undecaprenyl-pyrophosphoryl-MurNAc-(pentapeptide)GlcNAc (lipid intermediate II). In Francisella tularensis subsp. mediasiatica (strain FSC147), this protein is UDP-N-acetylglucosamine--N-acetylmuramyl-(pentapeptide) pyrophosphoryl-undecaprenol N-acetylglucosamine transferase.